A 120-amino-acid polypeptide reads, in one-letter code: Insoluble matrix shell protein 2 (120 aa).

A signal peptide spans 1-20 (MHQSSLGVLVLFSLIYLCIS).

As to expression, component of the acid-insoluble organic matrix of the calcified shell.

It localises to the secreted. This Ruditapes philippinarum (Japanese carpet shell) protein is Insoluble matrix shell protein 2.